Reading from the N-terminus, the 858-residue chain is Heat shock protein 105 kDa (858 aa).

Position 2 is an N-acetylserine (serine 2). Position 471 is an N6-acetyllysine (lysine 471). 2 disordered regions span residues 500-585 and 801-858; these read KVPT…PPEA and VTQP…MDLD. The segment covering 504 to 515 has biased composition (acidic residues); sequence EEEDGSSLEADM. Serine 509 and serine 510 each carry phosphoserine. Residues 533 to 549 show a composition bias toward polar residues; that stretch reads QQDNSEAGTQPQVQTDG. Phosphoserine is present on serine 558. Position 562 is a phosphothreonine (threonine 562). Composition is skewed to basic and acidic residues over residues 564-585 and 806-815; these read EESK…PPEA and PKIESPKLER. Serine 810 is modified (phosphoserine). Threonine 816 is subject to Phosphothreonine.

This sequence belongs to the heat shock protein 70 family. Interacts with HSPA8/HSC70. Interacts with HSPA1A (via NBD) and HSPA1B (via NBD). Phosphorylation on Ser-509 may be important for regulation of the HSPA8/HSC70 chaperone activity. As to expression, expressed in neurons in the cerebrum and Purkinje cells in the cerebellum (at protein level). Expressed in testis and no expression or only low-level expression in liver, spleen, lung, and kidney (at protein level). Highly expressed in the brain and moderately expressed in lung, heart, thymus, spleen, liver, and small intestine.

It localises to the cytoplasm. The protein resides in the nucleus. Functionally, acts as a nucleotide-exchange factor (NEF) for chaperone proteins HSPA1A and HSPA1B, promoting the release of ADP from HSPA1A/B thereby triggering client/substrate protein release. Prevents the aggregation of denatured proteins in cells under severe stress, on which the ATP levels decrease markedly. Inhibits HSPA8/HSC70 ATPase and chaperone activities. The polypeptide is Heat shock protein 105 kDa (Hsph1) (Mus musculus (Mouse)).